Reading from the N-terminus, the 227-residue chain is 2-C-methyl-D-erythritol 4-phosphate cytidylyltransferase (227 aa).

The protein belongs to the IspD/TarI cytidylyltransferase family. IspD subfamily.

The enzyme catalyses 2-C-methyl-D-erythritol 4-phosphate + CTP + H(+) = 4-CDP-2-C-methyl-D-erythritol + diphosphate. Its pathway is isoprenoid biosynthesis; isopentenyl diphosphate biosynthesis via DXP pathway; isopentenyl diphosphate from 1-deoxy-D-xylulose 5-phosphate: step 2/6. Its function is as follows. Catalyzes the formation of 4-diphosphocytidyl-2-C-methyl-D-erythritol from CTP and 2-C-methyl-D-erythritol 4-phosphate (MEP). The chain is 2-C-methyl-D-erythritol 4-phosphate cytidylyltransferase from Caldanaerobacter subterraneus subsp. tengcongensis (strain DSM 15242 / JCM 11007 / NBRC 100824 / MB4) (Thermoanaerobacter tengcongensis).